The following is a 444-amino-acid chain: Chitinase-like protein Idgf1 (444 aa).

The first 20 residues, 1–20 (MTSLLFVILNIILTLHLCAG), serve as a signal peptide directing secretion. The GH18 domain occupies 29–444 (KRLICYYDAQ…PILRSVRGHL (416 aa)). A disulfide bridge connects residues cysteine 33 and cysteine 60. Residues asparagine 213, asparagine 225, and asparagine 335 are each glycosylated (N-linked (GlcNAc...) asparagine). Residues cysteine 346 and cysteine 429 are joined by a disulfide bond.

The protein belongs to the glycosyl hydrolase 18 family. IDGF subfamily. Post-translationally, glycosylated.

It is found in the secreted. Functionally, cooperates with insulin-like peptides to stimulate the proliferation, polarization and motility of imaginal disk cells. May act by stabilizing the binding of insulin-like peptides to its receptor through a simultaneous interaction with both molecules to form a multiprotein signaling complex. The polypeptide is Chitinase-like protein Idgf1 (Idgf1) (Glossina morsitans morsitans (Savannah tsetse fly)).